The sequence spans 334 residues: Probable N5-carboxyaminoimidazole ribonucleotide mutase (334 aa).

Residues S11, D14, and R41 each coordinate substrate.

Belongs to the AIR carboxylase family. Class I subfamily.

It catalyses the reaction 5-carboxyamino-1-(5-phospho-D-ribosyl)imidazole + H(+) = 5-amino-1-(5-phospho-D-ribosyl)imidazole-4-carboxylate. The protein operates within purine metabolism; IMP biosynthesis via de novo pathway; 5-amino-1-(5-phospho-D-ribosyl)imidazole-4-carboxylate from 5-amino-1-(5-phospho-D-ribosyl)imidazole (N5-CAIR route): step 2/2. Its function is as follows. Catalyzes the conversion of N5-carboxyaminoimidazole ribonucleotide (N5-CAIR) to 4-carboxy-5-aminoimidazole ribonucleotide (CAIR). This Methanothermobacter thermautotrophicus (strain ATCC 29096 / DSM 1053 / JCM 10044 / NBRC 100330 / Delta H) (Methanobacterium thermoautotrophicum) protein is Probable N5-carboxyaminoimidazole ribonucleotide mutase.